A 275-amino-acid polypeptide reads, in one-letter code: MSAPVTRKRLTPKVIQAMKGECPIVSLTAYTTPVARLLDPHCDLLLVGDSLGMVLYGMESTLAVTLDMMIMHGQAVMRGTSHACVIVDMPFGSYQESKEQAFRNAARVMQETGCDGVKLEGGEEMAETVAFLVRRGIPVFGHVGLMPQQVNTVGGFRSLGRGDDEVGKIRRDAQAIAQAGAFAVVIEGTVEPLAREITALIDIPTVGIGASSACDGQVLVSDDMLGLFQDFTPRFVKRFAHLAPQVSQAAEAYAEEVRARRFPGPEHVFGAKPGA.

The Mg(2+) site is built by Asp-49 and Asp-88. 3-methyl-2-oxobutanoate-binding positions include 49-50, Asp-88, and Lys-118; that span reads DS. Position 120 (Glu-120) interacts with Mg(2+). Glu-187 (proton acceptor) is an active-site residue.

This sequence belongs to the PanB family. In terms of assembly, homodecamer; pentamer of dimers. Requires Mg(2+) as cofactor.

It is found in the cytoplasm. The catalysed reaction is 3-methyl-2-oxobutanoate + (6R)-5,10-methylene-5,6,7,8-tetrahydrofolate + H2O = 2-dehydropantoate + (6S)-5,6,7,8-tetrahydrofolate. Its pathway is cofactor biosynthesis; (R)-pantothenate biosynthesis; (R)-pantoate from 3-methyl-2-oxobutanoate: step 1/2. Catalyzes the reversible reaction in which hydroxymethyl group from 5,10-methylenetetrahydrofolate is transferred onto alpha-ketoisovalerate to form ketopantoate. In Brucella suis (strain ATCC 23445 / NCTC 10510), this protein is 3-methyl-2-oxobutanoate hydroxymethyltransferase.